The chain runs to 440 residues: Cobyrinate a,c-diamide synthase (440 aa).

One can recognise a GATase cobBQ-type domain in the interval 247 to 428; the sequence is RIAIAYDAAF…MHLYFPSNPR (182 aa). Catalysis depends on Cys-329, which acts as the Nucleophile.

The protein belongs to the CobB/CbiA family. It depends on Mg(2+) as a cofactor.

It carries out the reaction cob(II)yrinate + 2 L-glutamine + 2 ATP + 2 H2O = cob(II)yrinate a,c diamide + 2 L-glutamate + 2 ADP + 2 phosphate + 2 H(+). It participates in cofactor biosynthesis; adenosylcobalamin biosynthesis; cob(II)yrinate a,c-diamide from sirohydrochlorin (anaerobic route): step 10/10. Functionally, catalyzes the ATP-dependent amidation of the two carboxylate groups at positions a and c of cobyrinate, using either L-glutamine or ammonia as the nitrogen source. The protein is Cobyrinate a,c-diamide synthase of Picrophilus torridus (strain ATCC 700027 / DSM 9790 / JCM 10055 / NBRC 100828 / KAW 2/3).